Reading from the N-terminus, the 120-residue chain is Large ribosomal subunit protein uL22 (120 aa).

It belongs to the universal ribosomal protein uL22 family. Part of the 50S ribosomal subunit.

This protein binds specifically to 23S rRNA; its binding is stimulated by other ribosomal proteins, e.g. L4, L17, and L20. It is important during the early stages of 50S assembly. It makes multiple contacts with different domains of the 23S rRNA in the assembled 50S subunit and ribosome. Its function is as follows. The globular domain of the protein is located near the polypeptide exit tunnel on the outside of the subunit, while an extended beta-hairpin is found that lines the wall of the exit tunnel in the center of the 70S ribosome. This Corynebacterium urealyticum (strain ATCC 43042 / DSM 7109) protein is Large ribosomal subunit protein uL22.